The sequence spans 442 residues: Serum response factor-binding protein 1 (442 aa).

2 coiled-coil regions span residues 55 to 77 and 118 to 140; these read EDAL…AMKE and LLKR…RQNA. Disordered stretches follow at residues 137-336 and 358-442; these read RQNA…LETH and FHSL…TFDD. 2 stretches are compositionally biased toward basic and acidic residues: residues 149–159 and 167–188; these read ASKESQCEDIP and ESQH…DPTT. K202 participates in a covalent cross-link: Glycyl lysine isopeptide (Lys-Gly) (interchain with G-Cter in SUMO2). S215 is modified (phosphoserine). A compositionally biased stretch (polar residues) spans 237 to 247; that stretch reads GNHSQGKASTR. The segment covering 266 to 278 has biased composition (acidic residues); that stretch reads VSEEEKEYFDDST. A phosphoserine mark is found at S277, S292, and S294. K329 is covalently cross-linked (Glycyl lysine isopeptide (Lys-Gly) (interchain with G-Cter in SUMO2)). S362 carries the phosphoserine modification. Positions 367–382 are enriched in basic and acidic residues; the sequence is SRRDPREQAPKNKAPD.

Interacts with SRF. Forms complexes with SRF and SRF cofactors ARID2, MYOCD and NKX2-5. Interacts with the N-terminus of SLC2A4.

It is found in the cytoplasm. The protein resides in the perinuclear region. Functionally, may be involved in regulating transcriptional activation of cardiac genes during the aging process. May play a role in biosynthesis and/or processing of SLC2A4 in adipose cells. This is Serum response factor-binding protein 1 from Rattus norvegicus (Rat).